Consider the following 256-residue polypeptide: DNA repair protein RecO (256 aa).

Belongs to the RecO family.

Functionally, involved in DNA repair and RecF pathway recombination. The chain is DNA repair protein RecO from Rhizobium etli (strain ATCC 51251 / DSM 11541 / JCM 21823 / NBRC 15573 / CFN 42).